The primary structure comprises 156 residues: MPRKGQVERRDVMADPIYNSKLVTRLINRLMLDGKKGTAQQILYKAFEAIAERSGRDAMEVFEEAMNNIMPVLEVKARRVGGANYQVPVEVRPERRTTLALRYLVNYSRLRNEKTMDARLANEIMDAANNTGASVKKREDMHKMAEANKAFAHYRW.

Belongs to the universal ribosomal protein uS7 family. Part of the 30S ribosomal subunit. Contacts proteins S9 and S11.

In terms of biological role, one of the primary rRNA binding proteins, it binds directly to 16S rRNA where it nucleates assembly of the head domain of the 30S subunit. Is located at the subunit interface close to the decoding center, probably blocks exit of the E-site tRNA. The polypeptide is Small ribosomal subunit protein uS7 (Exiguobacterium sibiricum (strain DSM 17290 / CCUG 55495 / CIP 109462 / JCM 13490 / 255-15)).